The sequence spans 218 residues: Monomethylamine corrinoid protein 1 (218 aa).

In terms of domain architecture, B12-binding N-terminal spans 1 to 91; sequence MANQEIFDKL…ELEKTKVEGE (91 aa). Positions 94 to 218 constitute a B12-binding domain; the sequence is TGLAITFVAE…AAKVALNIMK (125 aa). Histidine 107 is a methylcob(III)alamin binding site.

It belongs to the methylamine corrinoid protein family. As to quaternary structure, can form a complex with MtmB.

Its pathway is one-carbon metabolism; methanogenesis from methylamine. Functionally, acts as a methyl group carrier between MtmB and MtbA. This Methanosarcina acetivorans (strain ATCC 35395 / DSM 2834 / JCM 12185 / C2A) protein is Monomethylamine corrinoid protein 1 (mtmC1).